Consider the following 343-residue polypeptide: N6-succino-2-amino-2'-deoxyadenylate synthase (343 aa).

Residue Ser-14 is the Proton acceptor of the active site. Ser-14, Thr-15, Gly-16, Lys-17, and Gly-18 together coordinate ATP. Position 14 (Ser-14) interacts with dGMP. Residue Ser-14 participates in Mg(2+) binding. Residue Asn-40 coordinates dGMP. The ATP site is built by Gly-42, His-43, and Thr-44. Residue Gly-42 participates in Mg(2+) binding. Positions 127, 128, and 142 each coordinate dGMP. Gln-187 contacts ATP. Residue Thr-202 coordinates dGMP. Residue Thr-263 coordinates Mg(2+). Positions 263, 264, and 269 each coordinate L-aspartate. ATP-binding residues include Asn-294, Asn-297, and Gly-330.

It belongs to the Caudovirales PurZ family. Mg(2+) serves as cofactor.

It catalyses the reaction dGMP + L-aspartate + ATP = (2S)-2-amino-2'-deoxyadenylo-succinate + ADP + phosphate + 2 H(+). The protein operates within purine metabolism. In terms of biological role, involved in the synthesis of the atypical nucleotide dZTP (2-amino-2'-deoxyadenosine-5'-triphosphate). Catalyzes the condensation of aspartate with deoxyguanylate into dSMP (N6-succino-2-amino-2'-deoxyadenylate), which undergoes defumarylation and phosphorylation respectively by host PurB and guanylate/nucleoside diphosphate kinases to give dZTP. dZTP is integrated into the viral genome instead of adenine by the viral DNA polymerase. This Z-base probably completely replaces adenosine and forms a triple bond to the opposite T-base. The resulting non-standard viral DNA is called Z-genome. The chemically modified DNA is probably harder for the host bacteria to digest with nucleases or restriction enzymes. The chain is N6-succino-2-amino-2'-deoxyadenylate synthase from Vibrio phage phiVC8.